The following is a 417-amino-acid chain: Glutamate-1-semialdehyde 2,1-aminomutase (417 aa).

Lys-267 carries the N6-(pyridoxal phosphate)lysine modification.

Belongs to the class-III pyridoxal-phosphate-dependent aminotransferase family. HemL subfamily. Homodimer. Pyridoxal 5'-phosphate serves as cofactor.

Its subcellular location is the cytoplasm. It carries out the reaction (S)-4-amino-5-oxopentanoate = 5-aminolevulinate. The protein operates within porphyrin-containing compound metabolism; protoporphyrin-IX biosynthesis; 5-aminolevulinate from L-glutamyl-tRNA(Glu): step 2/2. The polypeptide is Glutamate-1-semialdehyde 2,1-aminomutase (Solibacter usitatus (strain Ellin6076)).